A 330-amino-acid chain; its full sequence is NADH-quinone oxidoreductase subunit H (330 aa).

8 consecutive transmembrane segments (helical) span residues 11-31 (ILVAVLKAIVILLAVVVCGAL), 81-101 (FIFVLAPMIAFAAMLMAFAII), 114-134 (IGILFFFAMAGLSVYAVLFAG), 154-174 (ISYEVFLALALMGVVAQVGSF), 187-207 (LWFIIPQFFGFCTFFIAGVAV), 238-258 (FFVGEYVGIVTISALLVTLFF), 270-290 (QIPFFWFALKTAFFIMIFILL), and 309-329 (FCLPLTLINLLVTGALVLAAA).

This sequence belongs to the complex I subunit 1 family. NDH-1 is composed of 13 different subunits. Subunits NuoA, H, J, K, L, M, N constitute the membrane sector of the complex.

Its subcellular location is the cell inner membrane. The enzyme catalyses a quinone + NADH + 5 H(+)(in) = a quinol + NAD(+) + 4 H(+)(out). In terms of biological role, NDH-1 shuttles electrons from NADH, via FMN and iron-sulfur (Fe-S) centers, to quinones in the respiratory chain. The immediate electron acceptor for the enzyme in this species is believed to be ubiquinone. Couples the redox reaction to proton translocation (for every two electrons transferred, four hydrogen ions are translocated across the cytoplasmic membrane), and thus conserves the redox energy in a proton gradient. This subunit may bind ubiquinone. In Ectopseudomonas mendocina (strain ymp) (Pseudomonas mendocina), this protein is NADH-quinone oxidoreductase subunit H.